A 382-amino-acid polypeptide reads, in one-letter code: Lipid-A-disaccharide synthase (382 aa).

This sequence belongs to the LpxB family.

The catalysed reaction is 2-N,3-O-bis[(3R)-3-hydroxytetradecanoyl]-alpha-D-glucosaminyl 1-phosphate + UDP-2-N,3-O-bis[(3R)-3-hydroxytetradecanoyl]-alpha-D-glucosamine = lipid A disaccharide (E. coli) + UDP + H(+). It catalyses the reaction a lipid X + a UDP-2-N,3-O-bis[(3R)-3-hydroxyacyl]-alpha-D-glucosamine = a lipid A disaccharide + UDP + H(+). It participates in glycolipid biosynthesis; lipid IV(A) biosynthesis; lipid IV(A) from (3R)-3-hydroxytetradecanoyl-[acyl-carrier-protein] and UDP-N-acetyl-alpha-D-glucosamine: step 5/6. Its function is as follows. Condensation of UDP-2,3-diacylglucosamine and 2,3-diacylglucosamine-1-phosphate to form lipid A disaccharide, a precursor of lipid A, a phosphorylated glycolipid that anchors the lipopolysaccharide to the outer membrane of the cell. In Enterobacter sp. (strain 638), this protein is Lipid-A-disaccharide synthase.